A 475-amino-acid polypeptide reads, in one-letter code: Tubulin epsilon chain (475 aa).

Position 148 to 154 (148 to 154 (GGGTGSG)) interacts with GTP.

This sequence belongs to the tubulin family. Found in a complex with TEDC1, TEDC2, TUBE1 and TUBD1.

It localises to the cytoplasm. The protein resides in the cytoskeleton. The protein localises to the microtubule organizing center. Its subcellular location is the centrosome. The protein is Tubulin epsilon chain (Tube1) of Mus musculus (Mouse).